A 469-amino-acid polypeptide reads, in one-letter code: Desmin (469 aa).

Positions 2-107 (SQAYSSSQRV…QEFLTTRTNE (106 aa)) are head. Ser7 bears the Phosphoserine; by CDK1 mark. Ser12 bears the Phosphoserine; by AURKB mark. Omega-N-methylarginine is present on Arg16. The residue at position 17 (Thr17) is a Phosphothreonine; by AURKB and ROCK1. Phosphoserine; by CDK1 is present on residues Ser28 and Ser32. An Asymmetric dimethylarginine; alternate modification is found at Arg37. Arg37 is subject to Omega-N-methylarginine; alternate. Position 45 is a phosphoserine (Ser45). Residue Arg58 is modified to ADP-ribosylarginine. A Phosphoserine; by AURKB modification is found at Ser60. The residue at position 70 (Arg70) is an Omega-N-methylarginine. Thr76 bears the Phosphothreonine; by ROCK1 mark. At Ser81 the chain carries Phosphoserine. The IF rod domain maps to 107–415 (EKVELQELND…KLLEGEESRI (309 aa)). The coil 1A stretch occupies residues 108–140 (KVELQELNDRFANYIEKVRFLEQQNAALAAEVN). Residues 141 to 150 (RLKGREPTRV) are linker 1. The interval 151–251 (AEIYEEELRE…HEEEIRELQA (101 aa)) is coil 1B. The tract at residues 252 to 267 (QLQEQQVQVEMDMSKP) is linker 12. Residues 267–414 (PDLTAALRDI…RKLLEGEESR (148 aa)) form an interaction with NEB region. Residues 268–286 (DLTAALRDIRAQYETIAAK) form a coil 2A region. The tract at residues 287 to 294 (NISEAEEW) is linker 2. Phosphoserine occurs at positions 289, 357, 360, and 423. The tract at residues 295 to 411 (YKSKVSDLTQ…ATYRKLLEGE (117 aa)) is coil 2B. The tract at residues 412–469 (ESRINLPIQTYSALNFRETSPEQRGSEVHTKKTVMIKTIETRDGEVVSEATQQQHEVL) is tail. The interaction with CRYAB stretch occupies residues 437–452 (SEVHTKKTVMIKTIET).

It belongs to the intermediate filament family. In terms of assembly, homomer. Interacts with DST. Interacts with MTM1. Interacts with EPPK1; interaction is dependent of higher-order structure of intermediate filament. Interacts with CRYAB. Interacts with NEB (via nebulin repeats 160-164). Interacts (via rod region) with NEBL (via nebulin repeats 1-5). Interacts with ASB2; the interaction targets DES for proteasomal degradation. Interacts with PKP1. Interacts with FLII. ADP-ribosylation prevents ability to form intermediate filaments. In terms of processing, phosphorylation at Ser-7, Ser-28 and Ser-32 by CDK1, phosphorylation at Ser-60 by AURKB and phosphorylation at Thr-76 by ROCK1 contribute to efficient separation of desmin intermediate filaments during mitosis. Post-translationally, ubiquitination by a SCF-like complex containing ASB2 leads to proteasomal degradation.

It localises to the cytoplasm. The protein resides in the myofibril. Its subcellular location is the sarcomere. It is found in the z line. The protein localises to the cell membrane. It localises to the sarcolemma. The protein resides in the nucleus. Its subcellular location is the cell tip. It is found in the nucleus envelope. Its function is as follows. Muscle-specific type III intermediate filament essential for proper muscular structure and function. Plays a crucial role in maintaining the structure of sarcomeres, inter-connecting the Z-disks and forming the myofibrils, linking them not only to the sarcolemmal cytoskeleton, but also to the nucleus and mitochondria, thus providing strength for the muscle fiber during activity. In adult striated muscle they form a fibrous network connecting myofibrils to each other and to the plasma membrane from the periphery of the Z-line structures. May act as a sarcomeric microtubule-anchoring protein: specifically associates with detyrosinated tubulin-alpha chains, leading to buckled microtubules and mechanical resistance to contraction. Required for nuclear membrane integrity, via anchoring at the cell tip and nuclear envelope, resulting in maintenance of microtubule-derived intracellular mechanical forces. Contributes to the transcriptional regulation of the NKX2-5 gene in cardiac progenitor cells during a short period of cardiomyogenesis and in cardiac side population stem cells in the adult. Plays a role in maintaining an optimal conformation of nebulette (NEB) on heart muscle sarcomeres to bind and recruit cardiac alpha-actin. In Canis lupus familiaris (Dog), this protein is Desmin (DES).